A 167-amino-acid polypeptide reads, in one-letter code: General odorant-binding protein 1 (167 aa).

An N-terminal signal peptide occupies residues 1 to 22 (MAHTLQTVVLLLGTSILHPILA). Disulfide bonds link Cys41–Cys76, Cys72–Cys130, and Cys119–Cys139.

This sequence belongs to the PBP/GOBP family. As to expression, antenna.

Present in the aqueous fluid surrounding olfactory sensory dendrites and are thought to aid in the capture and transport of hydrophobic odorants into and through this fluid. The chain is General odorant-binding protein 1 from Antheraea pernyi (Chinese oak silk moth).